The chain runs to 258 residues: Indole-3-glycerol phosphate synthase (258 aa).

This sequence belongs to the TrpC family.

It carries out the reaction 1-(2-carboxyphenylamino)-1-deoxy-D-ribulose 5-phosphate + H(+) = (1S,2R)-1-C-(indol-3-yl)glycerol 3-phosphate + CO2 + H2O. The protein operates within amino-acid biosynthesis; L-tryptophan biosynthesis; L-tryptophan from chorismate: step 4/5. In Chlorobium phaeobacteroides (strain DSM 266 / SMG 266 / 2430), this protein is Indole-3-glycerol phosphate synthase.